The following is a 209-amino-acid chain: Ribonuclease HII (209 aa).

In terms of domain architecture, RNase H type-2 spans 5–202 (SMTLGIDEAG…KNRILNPKLL (198 aa)). Residues Asp11, Glu12, and Asp108 each coordinate a divalent metal cation.

It belongs to the RNase HII family. Requires Mn(2+) as cofactor. The cofactor is Mg(2+).

It is found in the cytoplasm. It catalyses the reaction Endonucleolytic cleavage to 5'-phosphomonoester.. In terms of biological role, endonuclease that specifically degrades the RNA of RNA-DNA hybrids. The polypeptide is Ribonuclease HII (rnhB) (Helicobacter pylori (strain J99 / ATCC 700824) (Campylobacter pylori J99)).